A 442-amino-acid chain; its full sequence is 3-isopropylmalate dehydratase large subunit (442 aa).

Residues Cys347, Cys407, and Cys410 each coordinate [4Fe-4S] cluster.

It belongs to the aconitase/IPM isomerase family. LeuC type 1 subfamily. In terms of assembly, heterodimer of LeuC and LeuD. [4Fe-4S] cluster serves as cofactor.

The catalysed reaction is (2R,3S)-3-isopropylmalate = (2S)-2-isopropylmalate. The protein operates within amino-acid biosynthesis; L-leucine biosynthesis; L-leucine from 3-methyl-2-oxobutanoate: step 2/4. Catalyzes the isomerization between 2-isopropylmalate and 3-isopropylmalate, via the formation of 2-isopropylmaleate. In Buchnera aphidicola subsp. Uroleucon solidaginis, this protein is 3-isopropylmalate dehydratase large subunit.